A 520-amino-acid chain; its full sequence is Cyclic AMP-responsive element-binding protein 3-like protein 2 (520 aa).

Residues 1–378 lie on the Cytoplasmic side of the membrane; the sequence is MEVLESGEQG…CKLAGTQTGT (378 aa). The residue at position 93 (Ser93) is a Phosphoserine. Residue Lys178 forms a Glycyl lysine isopeptide (Lys-Gly) (interchain with G-Cter in SUMO2) linkage. Ser191 carries the post-translational modification Phosphoserine. Residues 195–264 are disordered; it reads APVDHLHLPP…PHKLQGSGPL (70 aa). 2 stretches are compositionally biased toward low complexity: residues 208–220 and 234–255; these read SSHGSDSEGSLSP and SPSRAAPRAPSALSSSPLLTAP. The bZIP domain occupies 294 to 357; that stretch reads ALKKIRRKIK…RTLLQQLQKL (64 aa). Residues 296 to 325 are basic motif; the sequence is KKIRRKIKNKISAQESRRKKKEYMDSLEKK. Positions 336 to 357 are leucine-zipper; it reads LRKKVEVLENTNRTLLQQLQKL. A helical; Signal-anchor for type II membrane protein transmembrane segment spans residues 379 to 399; sequence CLMVVVLCFAVAFGSFFQGYG. Residues 400 to 520 lie on the Lumenal side of the membrane; that stretch reads PYPSATKMAL…ELDRRVNTTF (121 aa). An S1P recognition motif is present at residues 427 to 430; that stretch reads RNLL. Residues Asn480, Asn504, and Asn517 are each glycosylated (N-linked (GlcNAc...) asparagine).

It belongs to the bZIP family. ATF subfamily. Binds DNA as a dimer. Upon ER stress, translocated to the Golgi apparatus, where it is processed by regulated intramembrane proteolysis (RIP) to release the cytosol-facing N-terminal transcription factor domain. The cleavage is performed sequentially by site-1 and site-2 proteases (S1P/MBTPS1 and S2P/MBTPS2). Post-translationally, N-glycosylated. In terms of processing, ubiquitinated by HRD1/SYVN1; undergoes 'Lys-48'-linked ubiquitination, followed by rapid proteasomal degradation under normal conditions. Upon ER stress, SYVN1 E3 ubiquitin-protein ligase dissociates from its substrate, ubiquitination does not occur and CREB3L2 is stabilized.

Its subcellular location is the endoplasmic reticulum membrane. The protein localises to the nucleus. Functionally, transcription factor involved in unfolded protein response (UPR). In the absence of endoplasmic reticulum (ER) stress, inserted into ER membranes, with N-terminal DNA-binding and transcription activation domains oriented toward the cytosolic face of the membrane. In response to ER stress, transported to the Golgi, where it is cleaved in a site-specific manner by resident proteases S1P/MBTPS1 and S2P/MBTPS2. The released N-terminal cytosolic domain is translocated to the nucleus to effect transcription of specific target genes. Plays a critical role in chondrogenesis by activating the transcription of SEC23A, which promotes the transport and secretion of cartilage matrix proteins, and possibly that of ER biogenesis-related genes. In a neuroblastoma cell line, protects cells from ER stress-induced death. In vitro activates transcription of target genes via direct binding to the CRE site. The chain is Cyclic AMP-responsive element-binding protein 3-like protein 2 (CREB3L2) from Pongo abelii (Sumatran orangutan).